The following is a 380-amino-acid chain: MTHSPIQYRLIKKEKHTGARLGEIITPHGVFPTPMFMPVGTQATVKTQSPEELKEMKAGIILANTYHLWLRPGDDLVARAGGLHKFMNWDQPILTDSGGFQVYSLAEKRNITEEGVTFKNHLNGARMFLTPEKAISIQNNLGSDIMMSFDECPQFYQPYDYVKASIERTSRWAERGLKAHRRPQDQGLFGIVQGAGFEDLRRQSTADLVSMDFPGYSIGGLAVGESHEEMNAVLDFTTPLLPENKPRYLMGVGAPDSLIDGVIRGVDMFDCVLPTRIARNGTCMTSRGRLVVKNAQYAEDFTPLDHDCDCYTCQNYTRAYIRHLIKADETFGLRLTSYHNLYFLLNLMEKIRQAIMDDNILEFREDFIEKYGYGRSERNF.

D96 functions as the Proton acceptor in the catalytic mechanism. Substrate-binding positions include 96–100 (DSGGF), D150, Q193, and G220. The segment at 251-257 (GVGAPDS) is RNA binding. The active-site Nucleophile is D270. Residues 275-279 (TRIAR) form an RNA binding; important for wobble base 34 recognition region. Zn(2+)-binding residues include C308, C310, C313, and H339.

The protein belongs to the queuine tRNA-ribosyltransferase family. In terms of assembly, homodimer. Within each dimer, one monomer is responsible for RNA recognition and catalysis, while the other monomer binds to the replacement base PreQ1. Zn(2+) serves as cofactor.

The enzyme catalyses 7-aminomethyl-7-carbaguanine + guanosine(34) in tRNA = 7-aminomethyl-7-carbaguanosine(34) in tRNA + guanine. It participates in tRNA modification; tRNA-queuosine biosynthesis. Its function is as follows. Catalyzes the base-exchange of a guanine (G) residue with the queuine precursor 7-aminomethyl-7-deazaguanine (PreQ1) at position 34 (anticodon wobble position) in tRNAs with GU(N) anticodons (tRNA-Asp, -Asn, -His and -Tyr). Catalysis occurs through a double-displacement mechanism. The nucleophile active site attacks the C1' of nucleotide 34 to detach the guanine base from the RNA, forming a covalent enzyme-RNA intermediate. The proton acceptor active site deprotonates the incoming PreQ1, allowing a nucleophilic attack on the C1' of the ribose to form the product. After dissociation, two additional enzymatic reactions on the tRNA convert PreQ1 to queuine (Q), resulting in the hypermodified nucleoside queuosine (7-(((4,5-cis-dihydroxy-2-cyclopenten-1-yl)amino)methyl)-7-deazaguanosine). This is Queuine tRNA-ribosyltransferase from Streptococcus mutans serotype c (strain ATCC 700610 / UA159).